The chain runs to 521 residues: Pentatricopeptide repeat-containing protein At4g26680, mitochondrial (521 aa).

Residues 1-38 constitute a mitochondrion transit peptide; that stretch reads MIRISIGVNRRLRYQFSSFAGYSGSENPRLFKTLGAAN. 10 PPR repeats span residues 167 to 201, 202 to 236, 237 to 271, 272 to 306, 307 to 341, 342 to 376, 377 to 411, 412 to 446, 447 to 481, and 482 to 516; these read TPRV…GFLP, TVES…KISP, NPYT…GFRA, TDVS…GLQP, NVVT…NVAP, NTVT…GIQR, DILT…NLVP, NSST…GCHP, NEQT…SIPL, and DSRT…KFLQ.

Belongs to the PPR family. P subfamily.

It is found in the mitochondrion. This is Pentatricopeptide repeat-containing protein At4g26680, mitochondrial from Arabidopsis thaliana (Mouse-ear cress).